The following is a 244-amino-acid chain: Ureidoacrylate amidohydrolase RutB (244 aa).

Aspartate 38 functions as the Proton acceptor in the catalytic mechanism. Lysine 147 is an active-site residue. The active-site Nucleophile is cysteine 180.

Belongs to the isochorismatase family. RutB subfamily.

It catalyses the reaction (Z)-3-ureidoacrylate + H2O + H(+) = (Z)-3-aminoacrylate + NH4(+) + CO2. The catalysed reaction is (Z)-3-ureidoacrylate + H2O = (Z)-3-aminoacrylate + carbamate + H(+). It carries out the reaction (Z)-2-methylureidoacrylate + H2O + H(+) = (Z)-2-methylaminoacrylate + NH4(+) + CO2. In terms of biological role, hydrolyzes ureidoacrylate to form aminoacrylate and carbamate. The carbamate hydrolyzes spontaneously, thereby releasing one of the nitrogen atoms of the pyrimidine ring as ammonia and one of its carbon atoms as CO2. This is Ureidoacrylate amidohydrolase RutB from Shigella flexneri serotype X (strain 2002017).